The chain runs to 250 residues: MKVDLNADAGESYGAFAYGHDREIFPLVTSANLACGFHGGSPGRILEAVRLAKAHGVAVGAHPGFPDLVGFGRREMALSPEEVYADVLYQIGALSAFLKAEGLPLHHVKPHGALYLKACRDRETARAIALAVKAFDPGLPLVVLPGTVYEEEARKAGLRVVLEAFPERAYLRNGQLAPRSMPGSWITDPEEAARRALRMVLEGKVEALDGGEVAVRAETLCIHGDNPNAPEVARAVREALEQAGVEVRAF.

The protein belongs to the LamB/PxpA family. As to quaternary structure, forms a complex composed of PxpA, PxpB and PxpC.

It carries out the reaction 5-oxo-L-proline + ATP + 2 H2O = L-glutamate + ADP + phosphate + H(+). In terms of biological role, catalyzes the cleavage of 5-oxoproline to form L-glutamate coupled to the hydrolysis of ATP to ADP and inorganic phosphate. The polypeptide is 5-oxoprolinase subunit A (Thermus thermophilus (strain ATCC BAA-163 / DSM 7039 / HB27)).